The primary structure comprises 233 residues: tRNA (guanine-N(1)-)-methyltransferase (233 aa).

S-adenosyl-L-methionine contacts are provided by residues glycine 121 and 140-145; that span reads IGDYIL.

Belongs to the RNA methyltransferase TrmD family. As to quaternary structure, homodimer.

It localises to the cytoplasm. It carries out the reaction guanosine(37) in tRNA + S-adenosyl-L-methionine = N(1)-methylguanosine(37) in tRNA + S-adenosyl-L-homocysteine + H(+). In terms of biological role, specifically methylates guanosine-37 in various tRNAs. This is tRNA (guanine-N(1)-)-methyltransferase from Endomicrobium trichonymphae.